A 388-amino-acid polypeptide reads, in one-letter code: Na(+)/H(+) antiporter NhaA (388 aa).

Topologically, residues 1 to 11 (MKHLHRFFSSD) are cytoplasmic. Residues 12-31 (ASGGIILIIAAILAMIMANS) traverse the membrane as a helical segment. Residues 32 to 58 (GATSGWYHDFLETPVQLRVGSLEINKN) are Periplasmic-facing. The tract at residues 45 to 58 (PVQLRVGSLEINKN) is important for dimerization. A helical transmembrane segment spans residues 59–80 (MLLWINDALMAVFFLLVGLEVK). Over 81 to 96 (RELMQGSLASLRQAAF) the chain is Cytoplasmic. The chain crosses the membrane as a helical span at residues 97–116 (PVIAAIGGMIVPALLYLAFN). The Periplasmic portion of the chain corresponds to 117 to 122 (YADPIT). The helical transmembrane segment at 123-130 (REGWAIPA) threads the bilayer. Residues 131-154 (ATDIAFALGVLALLGSRVPLALKI) lie on the Cytoplasmic side of the membrane. The chain crosses the membrane as a helical span at residues 155-176 (FLMALAIIDDLGAIIIIALFYT). The Periplasmic segment spans residues 177–180 (NDLS). Residues 181–200 (MASLGVAAVAIAVLAVLNLC) traverse the membrane as a helical segment. The Cytoplasmic segment spans residues 201–204 (GARR). A helical membrane pass occupies residues 205–222 (TGVYILVGVVLWTAVLKS). Position 223 (G223) is a topological domain, periplasmic. Residues 224-236 (VHATLAGVIVGFF) form a helical membrane-spanning segment. Residues 237–253 (IPLKEKHGRSPAKRLEH) lie on the Cytoplasmic side of the membrane. A helical transmembrane segment spans residues 254 to 272 (VLHPWVAYLILPLFAFANA). At 273–286 (GVSLQGVTLDGLTS) the chain is on the periplasmic side. Residues 287–310 (ILPLGIIAGLLIGKPLGISLFCWL) traverse the membrane as a helical segment. At 311 to 339 (ALRLKLAHLPEGTTYQQIMVVGILCGIGF) the chain is on the cytoplasmic side. Residues 340-350 (TMSIFIASLAF) form a helical membrane-spanning segment. The Periplasmic portion of the chain corresponds to 351 to 357 (GSVDPEL). The chain crosses the membrane as a helical span at residues 358–380 (INWAKLGILVGSISSAVIGYSWL). Over 381-388 (RVRLRPSV) the chain is Cytoplasmic.

Belongs to the NhaA Na(+)/H(+) (TC 2.A.33) antiporter family. In terms of assembly, monomer. Homodimer. Under routine stress conditions, the monomeric form is fully functional. However, the dimeric form is much more efficient in conferring growth resistance under extreme stress conditions.

It localises to the cell inner membrane. It catalyses the reaction Na(+)(in) + 2 H(+)(out) = Na(+)(out) + 2 H(+)(in). It carries out the reaction Li(+)(in) + 2 H(+)(out) = Li(+)(out) + 2 H(+)(in). With respect to regulation, activity is regulated by pH. Active at alkaline pH. Activity is strongly down-regulated below pH 6.5 and a dramatic increase in activity is observed upon increase of the pH from 6.5 to 8.5. Its function is as follows. Na(+)/H(+) antiporter that extrudes sodium in exchange for external protons. Plays an important role in the regulation of intracellular pH, cellular Na(+) content and cell volume. Catalyzes the exchange of 2 H(+) per Na(+). This stoichiometry applies at both neutral and alkaline pH values. In addition, can also transport lithium and is involved in lithium detoxification. Binding of the Li(+) and H(+) ligands to NhaA is coupled and antagonistic. This Escherichia coli (strain K12) protein is Na(+)/H(+) antiporter NhaA.